We begin with the raw amino-acid sequence, 759 residues long: Olfactomedin-like protein 2B (759 aa).

The N-terminal stretch at 1–20 is a signal peptide; that stretch reads MAKSLLLVLCFALVTTLGWG. Coiled coils occupy residues 40–68 and 179–209; these read TEDETLQNEADNQENVLSQLLGDYDKVKA and KLEEEISKNLTKENEQIREDVEEIRTEMNKR. N-linked (GlcNAc...) asparagine glycosylation is found at N187 and N213. Disordered stretches follow at residues 346–396 and 456–494; these read TRRP…VSAS and THTAPVPPPPVRTDSPGKDSTARQGTVPPGPTLSPEEED. Positions 356–396 are enriched in low complexity; the sequence is AAVTADAGTTSAGTPTTALPSARLPASTAAPSTPDPAVSAS. The Olfactomedin-like domain occupies 502–759; that stretch reads RCKDTLSTIT…QVTYHVIFAY (258 aa). C503 and C689 form a disulfide bridge. N-linked (GlcNAc...) asparagine glycosylation occurs at N704.

In terms of assembly, homodimer. Binds to heparin and chondroitin sulfate E. O-glycosylated and N-glycosylated.

It localises to the secreted. The chain is Olfactomedin-like protein 2B (OLFML2B) from Bos taurus (Bovine).